The sequence spans 332 residues: Holliday junction branch migration complex subunit RuvB (332 aa).

Residues 1-181 (MARILDNDVM…FGITGHMEYY (181 aa)) form a large ATPase domain (RuvB-L) region. ATP-binding positions include Leu20, Arg21, Gly62, Lys65, Thr66, Thr67, 128–130 (EDF), Arg171, Tyr181, and Arg218. Thr66 lines the Mg(2+) pocket. The interval 182–252 (QEKDLTEIVE…ITDRALTMLD (71 aa)) is small ATPAse domain (RuvB-S). Residues 255-332 (REGLDYIDQK…RHLGYPYQNT (78 aa)) are head domain (RuvB-H). The DNA site is built by Arg291, Arg310, Arg312, and Arg315.

It belongs to the RuvB family. Homohexamer. Forms an RuvA(8)-RuvB(12)-Holliday junction (HJ) complex. HJ DNA is sandwiched between 2 RuvA tetramers; dsDNA enters through RuvA and exits via RuvB. An RuvB hexamer assembles on each DNA strand where it exits the tetramer. Each RuvB hexamer is contacted by two RuvA subunits (via domain III) on 2 adjacent RuvB subunits; this complex drives branch migration. In the full resolvosome a probable DNA-RuvA(4)-RuvB(12)-RuvC(2) complex forms which resolves the HJ.

It is found in the cytoplasm. The catalysed reaction is ATP + H2O = ADP + phosphate + H(+). In terms of biological role, the RuvA-RuvB-RuvC complex processes Holliday junction (HJ) DNA during genetic recombination and DNA repair, while the RuvA-RuvB complex plays an important role in the rescue of blocked DNA replication forks via replication fork reversal (RFR). RuvA specifically binds to HJ cruciform DNA, conferring on it an open structure. The RuvB hexamer acts as an ATP-dependent pump, pulling dsDNA into and through the RuvAB complex. RuvB forms 2 homohexamers on either side of HJ DNA bound by 1 or 2 RuvA tetramers; 4 subunits per hexamer contact DNA at a time. Coordinated motions by a converter formed by DNA-disengaged RuvB subunits stimulates ATP hydrolysis and nucleotide exchange. Immobilization of the converter enables RuvB to convert the ATP-contained energy into a lever motion, pulling 2 nucleotides of DNA out of the RuvA tetramer per ATP hydrolyzed, thus driving DNA branch migration. The RuvB motors rotate together with the DNA substrate, which together with the progressing nucleotide cycle form the mechanistic basis for DNA recombination by continuous HJ branch migration. Branch migration allows RuvC to scan DNA until it finds its consensus sequence, where it cleaves and resolves cruciform DNA. The chain is Holliday junction branch migration complex subunit RuvB from Streptococcus pyogenes serotype M3 (strain ATCC BAA-595 / MGAS315).